Reading from the N-terminus, the 230-residue chain is Cytochrome b6-f complex iron-sulfur subunit, chloroplastic (230 aa).

Low complexity predominate over residues 1–16 (MASTTLSATPTPSQLS). Positions 1–20 (MASTTLSATPTPSQLSAAKN) are disordered. The N-terminal 56 residues, 1–56 (MASTTLSATPTPSQLSAAKNGAYSPSRALLGKTARGLYPEKEMVSRKVTCQATSIP), are a transit peptide targeting the chloroplast. Residues 73-93 (LLGALSLPTAGMLIPYGAFFV) traverse the membrane as a helical segment. Residues 116 to 212 (AAAWLKTHGP…CDISEEGKVV (97 aa)) form the Rieske domain. [2Fe-2S] cluster-binding residues include Cys-158, His-160, Cys-176, and His-179. Cysteines 163 and 178 form a disulfide.

It belongs to the Rieske iron-sulfur protein family. As to quaternary structure, the 4 large subunits of the cytochrome b6-f complex are cytochrome b6, subunit IV (17 kDa polypeptide, petD), cytochrome f and the Rieske protein, while the 4 small subunits are petG, petL, petM and petN. The complex functions as a dimer. [2Fe-2S] cluster serves as cofactor.

It is found in the plastid. Its subcellular location is the chloroplast thylakoid membrane. It catalyses the reaction 2 oxidized [plastocyanin] + a plastoquinol + 2 H(+)(in) = 2 reduced [plastocyanin] + a plastoquinone + 4 H(+)(out). Its function is as follows. Component of the cytochrome b6-f complex, which mediates electron transfer between photosystem II (PSII) and photosystem I (PSI), cyclic electron flow around PSI, and state transitions. This is Cytochrome b6-f complex iron-sulfur subunit, chloroplastic (petC) from Fritillaria agrestis (Stinkbells).